The chain runs to 150 residues: Phosphoribosyl-AMP cyclohydrolase (150 aa).

D93 contacts Mg(2+). Residue C94 coordinates Zn(2+). Residues D95 and D97 each coordinate Mg(2+). C112 and C119 together coordinate Zn(2+).

Belongs to the PRA-CH family. As to quaternary structure, homodimer. Mg(2+) serves as cofactor. Zn(2+) is required as a cofactor.

It is found in the cytoplasm. It catalyses the reaction 1-(5-phospho-beta-D-ribosyl)-5'-AMP + H2O = 1-(5-phospho-beta-D-ribosyl)-5-[(5-phospho-beta-D-ribosylamino)methylideneamino]imidazole-4-carboxamide. It participates in amino-acid biosynthesis; L-histidine biosynthesis; L-histidine from 5-phospho-alpha-D-ribose 1-diphosphate: step 3/9. In terms of biological role, catalyzes the hydrolysis of the adenine ring of phosphoribosyl-AMP. This chain is Phosphoribosyl-AMP cyclohydrolase, found in Rhizobium etli (strain ATCC 51251 / DSM 11541 / JCM 21823 / NBRC 15573 / CFN 42).